Reading from the N-terminus, the 143-residue chain is Peptide methionine sulfoxide reductase MsrB (143 aa).

A MsrB domain is found at 16–139 (DAELRRRLTP…NSAALNFESR (124 aa)). Residues C55, C58, C104, and C107 each contribute to the Zn(2+) site. Catalysis depends on C128, which acts as the Nucleophile.

The protein belongs to the MsrB Met sulfoxide reductase family. Zn(2+) serves as cofactor.

It catalyses the reaction L-methionyl-[protein] + [thioredoxin]-disulfide + H2O = L-methionyl-(R)-S-oxide-[protein] + [thioredoxin]-dithiol. The chain is Peptide methionine sulfoxide reductase MsrB from Burkholderia multivorans (strain ATCC 17616 / 249).